An 81-amino-acid polypeptide reads, in one-letter code: Large ribosomal subunit protein bL31B (81 aa).

The protein belongs to the bacterial ribosomal protein bL31 family. Type B subfamily. Part of the 50S ribosomal subunit.

This chain is Large ribosomal subunit protein bL31B, found in Bacillus licheniformis (strain ATCC 14580 / DSM 13 / JCM 2505 / CCUG 7422 / NBRC 12200 / NCIMB 9375 / NCTC 10341 / NRRL NRS-1264 / Gibson 46).